The chain runs to 249 residues: Voltage-gated potassium channel subunit beta-3 (249 aa).

Residues Asn-44, Ser-74, Arg-75, Gln-100, Trp-129, Ser-130, Pro-131, Leu-132, Ala-133, Cys-134, Lys-140, Lys-150, Gly-209, Ser-211, Gln-215, and Glu-218 each contribute to the NADP(+) site.

This sequence belongs to the shaker potassium channel beta subunit family. In terms of assembly, forms heteromultimeric complex with alpha subunits. Interacts with KCNA5 and KCNB2. In terms of tissue distribution, strong expression in brain, with highest levels in neocortical and allocortical regions, hippocampus, olfactory bulb and cerebellum. Also strong in kidney. Weak expression in lung, skeletal muscle and heart.

Its subcellular location is the cytoplasm. Functionally, regulatory subunit of the voltage-gated potassium (Kv) channels composed of pore-forming and potassium-conducting alpha subunits and of regulatory beta subunit. The beta-3/KCNAB3 subunit may mediate closure of potassium channels. Enhances the expression of Kv2.2/KCNB2 alpha subunit-containing Kv channels but not Kv2.1/KCNB1. May display nicotinamide adenine dinucleotide phosphate (NADPH)-dependent aldoketoreductase activity. The binding of oxidized and reduced NADP(H) cofactors may be required for the regulation of potassium channel activity. In Mus musculus (Mouse), this protein is Voltage-gated potassium channel subunit beta-3.